A 206-amino-acid chain; its full sequence is Recombination protein RecR (206 aa).

The segment at Cys-58–Cys-73 adopts a C4-type zinc-finger fold. The Toprim domain occupies Gln-81–Ser-176.

Belongs to the RecR family.

Its function is as follows. May play a role in DNA repair. It seems to be involved in an RecBC-independent recombinational process of DNA repair. It may act with RecF and RecO. This is Recombination protein RecR from Flavobacterium psychrophilum (strain ATCC 49511 / DSM 21280 / CIP 103535 / JIP02/86).